We begin with the raw amino-acid sequence, 241 residues long: 2-C-methyl-D-erythritol 4-phosphate cytidylyltransferase (241 aa).

This sequence belongs to the IspD/TarI cytidylyltransferase family. IspD subfamily. Homodimer.

The enzyme catalyses 2-C-methyl-D-erythritol 4-phosphate + CTP + H(+) = 4-CDP-2-C-methyl-D-erythritol + diphosphate. The protein operates within isoprenoid biosynthesis; isopentenyl diphosphate biosynthesis via DXP pathway; isopentenyl diphosphate from 1-deoxy-D-xylulose 5-phosphate: step 2/6. Its function is as follows. Catalyzes the formation of 4-diphosphocytidyl-2-C-methyl-D-erythritol from CTP and 2-C-methyl-D-erythritol 4-phosphate (MEP). This Yersinia pestis protein is 2-C-methyl-D-erythritol 4-phosphate cytidylyltransferase.